A 146-amino-acid polypeptide reads, in one-letter code: Leptin (146 aa).

Cysteine 96 and cysteine 146 are disulfide-bonded.

It belongs to the leptin family.

It is found in the secreted. Key player in the regulation of energy balance and body weight control. Once released into the circulation, has central and peripheral effects by binding LEPR, found in many tissues, which results in the activation of several major signaling pathways. In the hypothalamus, acts as an appetite-regulating factor that induces a decrease in food intake and an increase in energy consumption by inducing anorexinogenic factors and suppressing orexigenic neuropeptides, also regulates bone mass and secretion of hypothalamo-pituitary-adrenal hormones. In the periphery, increases basal metabolism, influences reproductive function, regulates pancreatic beta-cell function and insulin secretion, is pro-angiogenic for endothelial cell and affects innate and adaptive immunity. In the arcuate nucleus of the hypothalamus, activates by depolarization POMC neurons inducing FOS and SOCS3 expression to release anorexigenic peptides and inhibits by hyperpolarization NPY neurons inducing SOCS3 with a consequent reduction on release of orexigenic peptides. In addition to its known satiety inducing effect, has a modulatory role in nutrient absorption. In the intestine, reduces glucose absorption by enterocytes by activating PKC and leading to a sequential activation of p38, PI3K and ERK signaling pathways which exerts an inhibitory effect on glucose absorption. Acts as a growth factor on certain tissues, through the activation of different signaling pathways increases expression of genes involved in cell cycle regulation such as CCND1, via JAK2-STAT3 pathway, or VEGFA, via MAPK1/3 and PI3K-AKT1 pathways. May also play an apoptotic role via JAK2-STAT3 pathway and up-regulation of BIRC5 expression. Pro-angiogenic, has mitogenic activity on vascular endothelial cells and plays a role in matrix remodeling by regulating the expression of matrix metalloproteinases (MMPs) and tissue inhibitors of metalloproteinases (TIMPs). In innate immunity, modulates the activity and function of neutrophils by increasing chemotaxis and the secretion of oxygen radicals. Increases phagocytosis by macrophages and enhances secretion of pro-inflammatory mediators. Increases cytotoxic ability of NK cells. Plays a pro-inflammatory role, in synergy with IL1B, by inducing NOS2 which promotes the production of IL6, IL8 and Prostaglandin E2, through a signaling pathway that involves JAK2, PI3K, MAP2K1/MEK1 and MAPK14/p38. In adaptive immunity, promotes the switch of memory T-cells towards T helper-1 cell immune responses. Increases CD4(+)CD25(-) T-cell proliferation and reduces autophagy during TCR (T-cell receptor) stimulation, through MTOR signaling pathway activation and BCL2 up-regulation. This Gorilla gorilla gorilla (Western lowland gorilla) protein is Leptin (LEP).